Reading from the N-terminus, the 334-residue chain is Nucleoid-associated protein Pfl01_0983 (334 aa).

The protein belongs to the YejK family.

It is found in the cytoplasm. The protein localises to the nucleoid. The polypeptide is Nucleoid-associated protein Pfl01_0983 (Pseudomonas fluorescens (strain Pf0-1)).